A 375-amino-acid chain; its full sequence is Chaperone protein DnaJ (375 aa).

A J domain is found at 5–70 (DYYEVLGVER…SKRAAFDQYG (66 aa)). A CR-type zinc finger spans residues 134–212 (GTTVSIRVPT…CHGEGRVEEY (79 aa)). Zn(2+)-binding residues include Cys147, Cys150, Cys164, Cys167, Cys186, Cys189, Cys200, and Cys203. 4 CXXCXGXG motif repeats span residues 147-154 (CQPCDGSG), 164-171 (CPTCGGIG), 186-193 (CPRCHGQG), and 200-207 (CTSCHGEG).

It belongs to the DnaJ family. As to quaternary structure, homodimer. Zn(2+) serves as cofactor.

It localises to the cytoplasm. Functionally, participates actively in the response to hyperosmotic and heat shock by preventing the aggregation of stress-denatured proteins and by disaggregating proteins, also in an autonomous, DnaK-independent fashion. Unfolded proteins bind initially to DnaJ; upon interaction with the DnaJ-bound protein, DnaK hydrolyzes its bound ATP, resulting in the formation of a stable complex. GrpE releases ADP from DnaK; ATP binding to DnaK triggers the release of the substrate protein, thus completing the reaction cycle. Several rounds of ATP-dependent interactions between DnaJ, DnaK and GrpE are required for fully efficient folding. Also involved, together with DnaK and GrpE, in the DNA replication of plasmids through activation of initiation proteins. This chain is Chaperone protein DnaJ, found in Pseudomonas putida (strain ATCC 47054 / DSM 6125 / CFBP 8728 / NCIMB 11950 / KT2440).